The chain runs to 201 residues: MALHDENVVWHSHPVTPQQREQHHGHRGVVLWFTGLSGSGKSTVAGALEEALHKLGVSTYLLDGDNVRHGLCSDLGFSDADRKENIRRVGEVANLMVEAGLVVLTAFISPHRAERQMVRERVGEGRFIEVFVDTPLAICEARDPKGLYKKARAGELRNFTGIDSVYEAPESAEIHLNGEQLVTNLVQQLLDLLRQNDIIRS.

The disordered stretch occupies residues 1-23 (MALHDENVVWHSHPVTPQQREQH). Residue 35–42 (GLSGSGKS) coordinates ATP. Ser-109 acts as the Phosphoserine intermediate in catalysis.

The protein belongs to the APS kinase family.

It catalyses the reaction adenosine 5'-phosphosulfate + ATP = 3'-phosphoadenylyl sulfate + ADP + H(+). It participates in sulfur metabolism; hydrogen sulfide biosynthesis; sulfite from sulfate: step 2/3. Functionally, catalyzes the synthesis of activated sulfate. In Escherichia coli O127:H6 (strain E2348/69 / EPEC), this protein is Adenylyl-sulfate kinase.